Consider the following 334-residue polypeptide: Ribosomal RNA small subunit methyltransferase H (334 aa).

Residues G53–H55, D72, F99, D122, and H129 each bind S-adenosyl-L-methionine.

It belongs to the methyltransferase superfamily. RsmH family.

The protein localises to the cytoplasm. It carries out the reaction cytidine(1402) in 16S rRNA + S-adenosyl-L-methionine = N(4)-methylcytidine(1402) in 16S rRNA + S-adenosyl-L-homocysteine + H(+). Its function is as follows. Specifically methylates the N4 position of cytidine in position 1402 (C1402) of 16S rRNA. The sequence is that of Ribosomal RNA small subunit methyltransferase H from Leptospira interrogans serogroup Icterohaemorrhagiae serovar Lai (strain 56601).